The primary structure comprises 141 residues: Large ribosomal subunit protein uL11 (141 aa).

It belongs to the universal ribosomal protein uL11 family. As to quaternary structure, part of the ribosomal stalk of the 50S ribosomal subunit. Interacts with L10 and the large rRNA to form the base of the stalk. L10 forms an elongated spine to which L12 dimers bind in a sequential fashion forming a multimeric L10(L12)X complex. One or more lysine residues are methylated.

Its function is as follows. Forms part of the ribosomal stalk which helps the ribosome interact with GTP-bound translation factors. The polypeptide is Large ribosomal subunit protein uL11 (Chlorobium phaeobacteroides (strain DSM 266 / SMG 266 / 2430)).